The following is a 365-amino-acid chain: Putative agmatine deiminase (365 aa).

Residues Glu-214 and Asp-220 each contribute to the agmatine site. Cys-357 acts as the Amidino-cysteine intermediate in catalysis.

It belongs to the agmatine deiminase family. In terms of assembly, tetramer of two homodimers.

The enzyme catalyses agmatine + H2O = N-carbamoylputrescine + NH4(+). This is Putative agmatine deiminase from Enterococcus faecalis (strain ATCC 700802 / V583).